We begin with the raw amino-acid sequence, 344 residues long: GTPase Obg (344 aa).

An Obg domain is found at 1-159 (MKFLDLAKVY…RTIWLRLKLI (159 aa)). An OBG-type G domain is found at 160–326 (ADVGLLGLPN…VLRVLRARVD (167 aa)). GTP-binding positions include 166-173 (GLPNAGKS), 191-195 (FTTLV), 212-215 (DIPG), 279-282 (NKID), and 307-309 (SGV). The Mg(2+) site is built by S173 and T193.

This sequence belongs to the TRAFAC class OBG-HflX-like GTPase superfamily. OBG GTPase family. Monomer. The cofactor is Mg(2+).

It is found in the cytoplasm. Functionally, an essential GTPase which binds GTP, GDP and possibly (p)ppGpp with moderate affinity, with high nucleotide exchange rates and a fairly low GTP hydrolysis rate. Plays a role in control of the cell cycle, stress response, ribosome biogenesis and in those bacteria that undergo differentiation, in morphogenesis control. The protein is GTPase Obg of Jannaschia sp. (strain CCS1).